We begin with the raw amino-acid sequence, 678 residues long: ATP-dependent RNA helicase DHX58 (678 aa).

The 178-residue stretch at Ile11 to Leu188 folds into the Helicase ATP-binding domain. Leu24–Thr31 contacts ATP. A DECH box motif is present at residues Asp131–His134. A Helicase C-terminal domain is found at Met353–Asp514. Residues Glu489 to Gln546 are a coiled coil. One can recognise an RLR CTR domain in the interval Ile542–Thr669. Zn(2+) is bound by residues Cys556, Cys559, Cys612, and Cys615. Residues Val572–Val655 are RNA-binding.

It belongs to the helicase family. RLR subfamily. In terms of assembly, monomer in the absence of dsRNA. Homodimer in the presence of dsRNA. Interacts with RIGI (via CARD domain), MAVS/IPS1 and DDX60. Found in a complex with RIGI and IFIH1/MDA5. Interacts with ANKRD17. Directly interacts with ATG5 and ATG12, either as ATG5 and ATG12 monomers or as ATG12-ATG5 conjugates. In terms of tissue distribution, highly expressed in mammary tissues. Expressed in liver and testis. Expressed at lower level in spleen, embryo, mammary gland and breast tumors.

It is found in the cytoplasm. The catalysed reaction is ATP + H2O = ADP + phosphate + H(+). In terms of biological role, acts as a regulator of RIGI and IFIH1/MDA5 mediated antiviral signaling. Cannot initiate antiviral signaling as it lacks the CARD domain required for activating MAVS/IPS1-dependent signaling events. Can have both negative and positive regulatory functions related to RIGI and IFIH1/MDA5 signaling and this role in regulating signaling may be complex and could probably depend on characteristics of the infecting virus or target cells, or both. Its inhibitory action on RIG-I signaling may involve the following mechanisms: competition with RIGI for binding to the viral RNA, binding to RIGI and inhibiting its dimerization and interaction with MAVS/IPS1, competing with IKBKE in its binding to MAVS/IPS1 thereby inhibiting activation of interferon regulatory factor 3 (IRF3). Its positive regulatory role may involve unwinding or stripping nucleoproteins of viral RNA thereby facilitating their recognition by RIGI and IFIH1/MDA5. Involved in the innate immune response to various RNA viruses and some DNA viruses such as poxviruses, and also to the bacterial pathogen Listeria monocytogenes. Can bind both ssRNA and dsRNA, with a higher affinity for dsRNA. Shows a preference to 5'-triphosphorylated RNA, although it can recognize RNA lacking a 5'-triphosphate. The chain is ATP-dependent RNA helicase DHX58 from Mus musculus (Mouse).